A 78-amino-acid polypeptide reads, in one-letter code: Sec-independent protein translocase protein TatA (78 aa).

A helical transmembrane segment spans residues Met1–Gly21. Positions Glu47 to Ser59 are enriched in basic and acidic residues. A disordered region spans residues Glu47–Ala78. A compositionally biased stretch (polar residues) spans Leu60 to Thr69.

The protein belongs to the TatA/E family. As to quaternary structure, the Tat system comprises two distinct complexes: a TatABC complex, containing multiple copies of TatA, TatB and TatC subunits, and a separate TatA complex, containing only TatA subunits. Substrates initially bind to the TatABC complex, which probably triggers association of the separate TatA complex to form the active translocon.

It localises to the cell inner membrane. In terms of biological role, part of the twin-arginine translocation (Tat) system that transports large folded proteins containing a characteristic twin-arginine motif in their signal peptide across membranes. TatA could form the protein-conducting channel of the Tat system. The polypeptide is Sec-independent protein translocase protein TatA (Vibrio vulnificus (strain YJ016)).